The chain runs to 696 residues: DNA-directed RNA polymerase subunit beta' (696 aa).

Zn(2+) is bound by residues Cys-69, Cys-71, Cys-87, and Cys-90. Residues Asp-504, Asp-506, and Asp-508 each coordinate Mg(2+).

It belongs to the RNA polymerase beta' chain family. RpoC1 subfamily. In plastids the minimal PEP RNA polymerase catalytic core is composed of four subunits: alpha, beta, beta', and beta''. When a (nuclear-encoded) sigma factor is associated with the core the holoenzyme is formed, which can initiate transcription. It depends on Mg(2+) as a cofactor. The cofactor is Zn(2+).

It localises to the plastid. Its subcellular location is the chloroplast. It carries out the reaction RNA(n) + a ribonucleoside 5'-triphosphate = RNA(n+1) + diphosphate. Functionally, DNA-dependent RNA polymerase catalyzes the transcription of DNA into RNA using the four ribonucleoside triphosphates as substrates. In Pinus thunbergii (Japanese black pine), this protein is DNA-directed RNA polymerase subunit beta'.